The primary structure comprises 61 residues: Small ribosomal subunit protein uS14 (61 aa).

4 residues coordinate Zn(2+): cysteine 24, cysteine 27, cysteine 40, and cysteine 43.

This sequence belongs to the universal ribosomal protein uS14 family. Zinc-binding uS14 subfamily. In terms of assembly, part of the 30S ribosomal subunit. Contacts proteins S3 and S10. Zn(2+) is required as a cofactor.

Binds 16S rRNA, required for the assembly of 30S particles and may also be responsible for determining the conformation of the 16S rRNA at the A site. This Finegoldia magna (strain ATCC 29328 / DSM 20472 / WAL 2508) (Peptostreptococcus magnus) protein is Small ribosomal subunit protein uS14.